The primary structure comprises 268 residues: 4-pyridoxolactonase (268 aa).

Zn(2+) is bound by residues His96, His98, Asp100, His101, His185, Asp207, and His252. The Proton donor/acceptor role is filled by Asp100.

This sequence belongs to the metallo-beta-lactamase superfamily. In terms of assembly, homodimer. The cofactor is Zn(2+).

It carries out the reaction 4-pyridoxolactone + H2O = 4-pyridoxate + H(+). It functions in the pathway cofactor degradation; B6 vitamer degradation; 4-pyridoxate from pyridoxal: step 2/2. Inhibited by Hg(2+). Involved in the degradation of pyridoxine or pyridoxamine (free, phosphate-unbound, forms of vitamin B6). Hydrolyzes 4-pyridoxolactone to 4-pyridoxic acid. Has lower activity toward N-hexanoyl-D,L-homoserine lactone, but is not active toward 5-pyridoxolactone and gamma-butyrolactone. The sequence is that of 4-pyridoxolactonase from Mesorhizobium japonicum (strain LMG 29417 / CECT 9101 / MAFF 303099) (Mesorhizobium loti (strain MAFF 303099)).